We begin with the raw amino-acid sequence, 346 residues long: 3-dehydroquinate synthase (346 aa).

NAD(+)-binding positions include 61 to 66, 95 to 99, 119 to 120, lysine 132, and lysine 141; these read DGEAYK, GVIGD, and TT. Positions 174, 233, and 250 each coordinate Zn(2+).

This sequence belongs to the sugar phosphate cyclases superfamily. Dehydroquinate synthase family. NAD(+) is required as a cofactor. It depends on Co(2+) as a cofactor. The cofactor is Zn(2+).

It localises to the cytoplasm. It catalyses the reaction 7-phospho-2-dehydro-3-deoxy-D-arabino-heptonate = 3-dehydroquinate + phosphate. Its pathway is metabolic intermediate biosynthesis; chorismate biosynthesis; chorismate from D-erythrose 4-phosphate and phosphoenolpyruvate: step 2/7. In terms of biological role, catalyzes the conversion of 3-deoxy-D-arabino-heptulosonate 7-phosphate (DAHP) to dehydroquinate (DHQ). The polypeptide is 3-dehydroquinate synthase (Wolinella succinogenes (strain ATCC 29543 / DSM 1740 / CCUG 13145 / JCM 31913 / LMG 7466 / NCTC 11488 / FDC 602W) (Vibrio succinogenes)).